The sequence spans 645 residues: Acetyl-coenzyme A synthetase (645 aa).

Residues 190-193 and Thr309 contribute to the CoA site; that span reads RGGR. ATP is bound by residues 385 to 387, 409 to 414, Asp498, and Arg513; these read GEP and DTWWQT. Ser521 provides a ligand contact to CoA. Arg524 lines the ATP pocket. Val535, His537, and Val540 together coordinate Mg(2+). Arg582 lines the CoA pocket. At Lys607 the chain carries N6-acetyllysine.

Belongs to the ATP-dependent AMP-binding enzyme family. It depends on Mg(2+) as a cofactor. Post-translationally, acetylated. Deacetylation by the SIR2-homolog deacetylase activates the enzyme.

The catalysed reaction is acetate + ATP + CoA = acetyl-CoA + AMP + diphosphate. Its function is as follows. Catalyzes the conversion of acetate into acetyl-CoA (AcCoA), an essential intermediate at the junction of anabolic and catabolic pathways. AcsA undergoes a two-step reaction. In the first half reaction, AcsA combines acetate with ATP to form acetyl-adenylate (AcAMP) intermediate. In the second half reaction, it can then transfer the acetyl group from AcAMP to the sulfhydryl group of CoA, forming the product AcCoA. The chain is Acetyl-coenzyme A synthetase from Methylocella silvestris (strain DSM 15510 / CIP 108128 / LMG 27833 / NCIMB 13906 / BL2).